The sequence spans 481 residues: Glutamate--tRNA ligase (481 aa).

Residues 28-38 (PSPTGFLHLGG) carry the 'HIGH' region motif. A compositionally biased stretch (basic and acidic residues) spans 139 to 148 (RYDGTWRPEP). The segment at 139–159 (RYDGTWRPEPGKTLPPVPADR) is disordered. A 'KMSKS' region motif is present at residues 260 to 264 (KLSKR). Residue K263 coordinates ATP.

Belongs to the class-I aminoacyl-tRNA synthetase family. Glutamate--tRNA ligase type 1 subfamily. As to quaternary structure, monomer.

It localises to the cytoplasm. The catalysed reaction is tRNA(Glu) + L-glutamate + ATP = L-glutamyl-tRNA(Glu) + AMP + diphosphate. Its function is as follows. Catalyzes the attachment of glutamate to tRNA(Glu) in a two-step reaction: glutamate is first activated by ATP to form Glu-AMP and then transferred to the acceptor end of tRNA(Glu). The chain is Glutamate--tRNA ligase from Bordetella bronchiseptica (strain ATCC BAA-588 / NCTC 13252 / RB50) (Alcaligenes bronchisepticus).